Consider the following 110-residue polypeptide: Transcription factor S (110 aa).

Zn(2+)-binding residues include Cys-4, Cys-7, Cys-22, Cys-25, Cys-71, Cys-74, Cys-99, and Cys-102. Residues 67–107 (TKVTCPKCGNDTAYWWEMQTRAGDEPSTIFYKCTKCGYTWR) form a TFIIS-type zinc finger.

Belongs to the archaeal rpoM/eukaryotic RPA12/RPB9/RPC11 RNA polymerase family.

The protein resides in the chromosome. Functionally, involved in transcriptional proofreading and fidelity. Induces RNA cleavage activity in RNA polymerase (RNAP). Stimulates transcription elongation by RNAP on both naked DNA and histone-bound DNA (chromatin), facilitating transcription through the histone barrier. Stimulation depends on transcript cleavage. In the presence of TFS, the cleavage activity of RNAP truncates RNA back to position +15 in a stepwise manner by releasing mainly dinucleotides from the 3'-end of the nascent RNA. The truncated RNAs are able to continue elongation. Misincorporation of nucleotides during elongation of transcription leads to arrested elongation complexes which are rescued by TFS-promoted removal of a dinucleotide from the 3'-end. TFS is able to induce a cleavage resynthesis cycle in stalled elongation complexes (resulting from the next missing nucleotide or a reduced incorporation rate of a wrong nucleotide) preventing misincorporation and enabling proofreading in a post-incorporation manner. Pausing of elongation complexes is the main determinant of TFS-induced RNA cleavage. The sequence is that of Transcription factor S from Thermococcus kodakarensis (strain ATCC BAA-918 / JCM 12380 / KOD1) (Pyrococcus kodakaraensis (strain KOD1)).